A 345-amino-acid chain; its full sequence is tRNA N6-adenosine threonylcarbamoyltransferase (345 aa).

Histidine 113 and histidine 117 together coordinate Fe cation. Residues 142–146 (AISGG), aspartate 175, glycine 188, aspartate 192, and asparagine 282 each bind substrate. Fe cation is bound at residue aspartate 310.

The protein belongs to the KAE1 / TsaD family. The cofactor is Fe(2+).

It is found in the cytoplasm. The catalysed reaction is L-threonylcarbamoyladenylate + adenosine(37) in tRNA = N(6)-L-threonylcarbamoyladenosine(37) in tRNA + AMP + H(+). In terms of biological role, required for the formation of a threonylcarbamoyl group on adenosine at position 37 (t(6)A37) in tRNAs that read codons beginning with adenine. Is involved in the transfer of the threonylcarbamoyl moiety of threonylcarbamoyl-AMP (TC-AMP) to the N6 group of A37, together with TsaE and TsaB. TsaD likely plays a direct catalytic role in this reaction. This is tRNA N6-adenosine threonylcarbamoyltransferase from Bdellovibrio bacteriovorus (strain ATCC 15356 / DSM 50701 / NCIMB 9529 / HD100).